Here is a 379-residue protein sequence, read N- to C-terminus: Chaperone protein DnaJ (379 aa).

The region spanning 5-70 is the J domain; it reads DYYEILGLDK…QKKAQYDQFG (66 aa). A CR-type zinc finger spans residues 135-217; that stretch reads GVEKEISVTR…CRGKGIVRKH (83 aa). Zn(2+)-binding residues include C148, C151, C165, C168, C191, C194, C205, and C208. CXXCXGXG motif repeat units lie at residues 148-155, 165-172, 191-198, and 205-212; these read CETCNGTG, CDKCNGTG, CDKCGGRG, and CEECRGKG.

This sequence belongs to the DnaJ family. Homodimer. It depends on Zn(2+) as a cofactor.

The protein localises to the cytoplasm. Functionally, participates actively in the response to hyperosmotic and heat shock by preventing the aggregation of stress-denatured proteins and by disaggregating proteins, also in an autonomous, DnaK-independent fashion. Unfolded proteins bind initially to DnaJ; upon interaction with the DnaJ-bound protein, DnaK hydrolyzes its bound ATP, resulting in the formation of a stable complex. GrpE releases ADP from DnaK; ATP binding to DnaK triggers the release of the substrate protein, thus completing the reaction cycle. Several rounds of ATP-dependent interactions between DnaJ, DnaK and GrpE are required for fully efficient folding. Also involved, together with DnaK and GrpE, in the DNA replication of plasmids through activation of initiation proteins. The chain is Chaperone protein DnaJ from Clostridium kluyveri (strain ATCC 8527 / DSM 555 / NBRC 12016 / NCIMB 10680 / K1).